The sequence spans 448 residues: Bifunctional protein GlmU (448 aa).

The pyrophosphorylase stretch occupies residues 1–229 (MNNHTLNIII…NDEIQGINNL (229 aa)). Residues 11–14 (LAAG), lysine 25, glutamine 76, 81–82 (GT), 103–105 (YGD), glycine 140, glutamate 154, asparagine 169, and asparagine 227 each bind UDP-N-acetyl-alpha-D-glucosamine. Aspartate 105 serves as a coordination point for Mg(2+). Residue asparagine 227 participates in Mg(2+) binding. The linker stretch occupies residues 230–250 (LQLVRAEKIYQKQQAKLLLLS). An N-acetyltransferase region spans residues 251–448 (GIMIYNPSNF…NEKKQIHKKL (198 aa)). A UDP-N-acetyl-alpha-D-glucosamine-binding site is contributed by lysine 351. Histidine 363 (proton acceptor) is an active-site residue. UDP-N-acetyl-alpha-D-glucosamine-binding residues include tyrosine 366 and asparagine 377. Acetyl-CoA is bound by residues alanine 380, 386–387 (NY), serine 405, and alanine 423.

It in the N-terminal section; belongs to the N-acetylglucosamine-1-phosphate uridyltransferase family. In the C-terminal section; belongs to the transferase hexapeptide repeat family. In terms of assembly, homotrimer. Mg(2+) is required as a cofactor.

Its subcellular location is the cytoplasm. It catalyses the reaction alpha-D-glucosamine 1-phosphate + acetyl-CoA = N-acetyl-alpha-D-glucosamine 1-phosphate + CoA + H(+). The catalysed reaction is N-acetyl-alpha-D-glucosamine 1-phosphate + UTP + H(+) = UDP-N-acetyl-alpha-D-glucosamine + diphosphate. It functions in the pathway nucleotide-sugar biosynthesis; UDP-N-acetyl-alpha-D-glucosamine biosynthesis; N-acetyl-alpha-D-glucosamine 1-phosphate from alpha-D-glucosamine 6-phosphate (route II): step 2/2. The protein operates within nucleotide-sugar biosynthesis; UDP-N-acetyl-alpha-D-glucosamine biosynthesis; UDP-N-acetyl-alpha-D-glucosamine from N-acetyl-alpha-D-glucosamine 1-phosphate: step 1/1. Its pathway is bacterial outer membrane biogenesis; LPS lipid A biosynthesis. Catalyzes the last two sequential reactions in the de novo biosynthetic pathway for UDP-N-acetylglucosamine (UDP-GlcNAc). The C-terminal domain catalyzes the transfer of acetyl group from acetyl coenzyme A to glucosamine-1-phosphate (GlcN-1-P) to produce N-acetylglucosamine-1-phosphate (GlcNAc-1-P), which is converted into UDP-GlcNAc by the transfer of uridine 5-monophosphate (from uridine 5-triphosphate), a reaction catalyzed by the N-terminal domain. The protein is Bifunctional protein GlmU of Buchnera aphidicola subsp. Baizongia pistaciae (strain Bp).